The following is a 1334-amino-acid chain: Aldehyde oxidase 3 (1334 aa).

A 2Fe-2S ferredoxin-type domain is found at D8–I95. Positions 47, 52, 55, and 77 each coordinate [2Fe-2S] cluster. Mo-molybdopterin is bound at residue Q116. Positions 117, 120, 152, and 154 each coordinate [2Fe-2S] cluster. An FAD-binding PCMH-type domain is found at F236 to K421. L264–L271 contacts FAD. Position 320 is a phosphoserine (S320). FAD is bound by residues S354, H358, D367, and L411. Residues G801, L1042, and Q1198 each contribute to the Mo-molybdopterin site. Residue E1265 is the Proton acceptor; for azaheterocycle hydroxylase activity of the active site.

The protein belongs to the xanthine dehydrogenase family. Homodimer. The cofactor is [2Fe-2S] cluster. FAD is required as a cofactor. Requires Mo-molybdopterin as cofactor.

It is found in the cytoplasm. The enzyme catalyses an aldehyde + O2 + H2O = a carboxylate + H2O2 + H(+). In terms of biological role, oxidase with broad substrate specificity, oxidizing aromatic azaheterocycles, such as N1-methylnicotinamide and phthalazine, as well as aldehydes, such as benzaldehyde, retinal and pyridoxal. Plays a key role in the metabolism of xenobiotics and drugs containing aromatic azaheterocyclic substituents. Is probably involved in the regulation of reactive oxygen species homeostasis. Is a prominent source of superoxide generation via the one-electron reduction of molecular oxygen. Also catalyzes nitric oxide (NO) production; under anaerobic conditions, reduces nitrite to NO with NADH or aldehyde as electron donor, but under aerobic conditions, NADH is the preferred substrate. These reactions may be catalyzed by several isozymes. The chain is Aldehyde oxidase 3 (Aox3) from Rattus norvegicus (Rat).